Reading from the N-terminus, the 813-residue chain is Polycomb group protein FERTILIZATION-INDEPENDENT SEED 2 (813 aa).

The tract at residues 1-27 (MARKSIRGKEVVMVSDDDDDDDDVDDD) is disordered. Positions 15 to 26 (SDDDDDDDDVDD) are enriched in acidic residues. Residues 134–155 (CPFCLIPCGGHEGLQLHLKSSH) form a C2H2-type zinc finger. 3 disordered regions span residues 197–216 (SPLT…DDSN), 232–261 (DLPR…SEKI), and 274–648 (ESSE…RKEL). Residues 232-246 (DLPRGTENDSTHVND) are compositionally biased toward basic and acidic residues. One copy of the A-1 repeat lies at 243–264 (HVNDDNVSSPPRAHSSEKISDI). The 12 X approximate repeat A stretch occupies residues 243 to 542 (HVNDDNVSSP…HSSKKNKSTR (300 aa)). One copy of the B-1 repeat lies at 265–281 (LTTTQLAIAESSEPKVP). The 7 X approximate repeat B stretch occupies residues 265-640 (LTTTQLAIAE…KAEPSEPKVT (376 aa)). Residues 282-304 (HVNDGNVSSPPRAHSSAEKNEST) form an A-2 repeat. Basic and acidic residues-rich tracts occupy residues 296-307 (SSAEKNESTHVN), 319-331 (HSLE…HVNE), and 344-353 (KKNESTHMND). The A-3 repeat unit spans residues 305–327 (HVNDDDDVSSPPRAHSLEKNEST). An A-4 repeat occupies 328–349 (HVNEDNISSPPKAHSSKKNEST). Residues 350 to 371 (HMNDEDVSFPPRTRSSKETSDI) form an A-5 repeat. Residues 372 to 388 (LTTTQPAIVEPSEPKVR) form a B-2 repeat. Basic residues predominate over residues 388–402 (RRGSRRKQLYAKRYK). One copy of the B-3 repeat lies at 403–419 (ARETQPAIAESSEPKVL). Composition is skewed to basic and acidic residues over residues 414–423 (SEPKVLHVND) and 453–462 (SEPKVPHVND). An A-6 repeat occupies 420 to 441 (HVNDENVSSPPEAHSLEKASDI). The B-4 repeat unit spans residues 442–458 (LTTTQPAIAESSEPKVP). The stretch at 459-481 (HVNDENVSSTPRAHSSKKNKSTR) is one A-7 repeat. A compositionally biased stretch (basic residues) spans 472–481 (HSSKKNKSTR). Residues 482 to 502 (KNVDNVPSPPKTRSSKKTSDI) form an A-8 repeat. Polar residues predominate over residues 501-512 (DILTTTQPTIAE). A B-5 repeat occupies 503–519 (LTTTQPTIAESSEPKVR). Positions 514 to 523 (SEPKVRHVND) are enriched in basic and acidic residues. The A-9 repeat unit spans residues 520 to 542 (HVNDDNVSSTPRAHSSKKNKSTR). Residues 543–563 (KNDDNIPSPPKTRSSKKTSNI) form an A-10 repeat. Residues 564–579 (LTRTQPAIAESEPKVP) form a B-6 repeat. Positions 574–586 (SEPKVPHVNDDKV) are enriched in basic and acidic residues. Residues 580–601 (HVNDDKVSSTPRAHSSKKNKST) form an A-11 repeat. A compositionally biased stretch (basic residues) spans 593-602 (HSSKKNKSTH). Residues 602 to 623 (HKKDDNASLPPKTRSSKKTSDI) form an A-12 repeat. A B-7 repeat occupies 624–640 (LATTQPAKAEPSEPKVT). Residues 648–783 (LHAERCEAKR…CAKTFHKCTT (136 aa)) are VEFS-box.

This sequence belongs to the VEFS (VRN2-EMF2-FIS2-SU(Z)12) family. Probably indirectly associated with FIE and/or MEA. In plants, PcG complexes are probably composed of a member of the EZ family (CLF or MEA), FIE, and a member of the VEFS family (FIS2, VRN2 or EMF2). In terms of tissue distribution, weakly expressed. Expressed in late siliques.

The protein resides in the nucleus. In terms of biological role, polycomb group (PcG) protein. PcG proteins act by forming multiprotein complexes, which are required to maintain the transcriptionally repressive state of homeotic genes throughout development. PcG proteins are not required to initiate repression, but to maintain it during later stages of development. They probably act via the methylation of histones, rendering chromatin heritably changed in its expressibility. Required to prevent the proliferation of the central cell by repressing unknown target genes before fertilization. Regulates the anteroposterior organization of the endosperm. This is Polycomb group protein FERTILIZATION-INDEPENDENT SEED 2 from Arabidopsis thaliana (Mouse-ear cress).